The following is a 571-amino-acid chain: Urease subunit alpha (571 aa).

A Urease domain is found at glycine 133–phenylalanine 571. Residues histidine 138, histidine 140, and lysine 221 each contribute to the Ni(2+) site. Residue lysine 221 is modified to N6-carboxylysine. Histidine 223 is a binding site for substrate. Residues histidine 250 and histidine 276 each contribute to the Ni(2+) site. Residue histidine 324 is the Proton donor of the active site. Ni(2+) is bound at residue aspartate 364.

Belongs to the metallo-dependent hydrolases superfamily. Urease alpha subunit family. As to quaternary structure, heterotrimer of UreA (gamma), UreB (beta) and UreC (alpha) subunits. Three heterotrimers associate to form the active enzyme. Ni cation is required as a cofactor. In terms of processing, carboxylation allows a single lysine to coordinate two nickel ions.

It is found in the cytoplasm. The catalysed reaction is urea + 2 H2O + H(+) = hydrogencarbonate + 2 NH4(+). It participates in nitrogen metabolism; urea degradation; CO(2) and NH(3) from urea (urease route): step 1/1. The polypeptide is Urease subunit alpha (Staphylococcus aureus (strain bovine RF122 / ET3-1)).